We begin with the raw amino-acid sequence, 167 residues long: Endoribonuclease YbeY (167 aa).

Residues histidine 132, histidine 136, and histidine 142 each contribute to the Zn(2+) site.

This sequence belongs to the endoribonuclease YbeY family. Zn(2+) is required as a cofactor.

It localises to the cytoplasm. In terms of biological role, single strand-specific metallo-endoribonuclease involved in late-stage 70S ribosome quality control and in maturation of the 3' terminus of the 16S rRNA. This Clostridium beijerinckii (strain ATCC 51743 / NCIMB 8052) (Clostridium acetobutylicum) protein is Endoribonuclease YbeY.